The chain runs to 152 residues: Sorting nexin-3 (152 aa).

The region spanning 30–147 (NFLEIEVRSP…CAFIQDPQWD (118 aa)) is the PX domain. The a 1,2-diacyl-sn-glycero-3-phospho-(1D-myo-inositol-3-phosphate) site is built by Arg73, Ser75, Lys99, Arg104, and Arg113.

This sequence belongs to the sorting nexin family.

The protein resides in the cytoplasm. Its subcellular location is the golgi apparatus membrane. It is found in the prevacuolar compartment membrane. In terms of biological role, required for retention of late Golgi membrane proteins. Component of the retrieval machinery that functions by direct interaction with the cytosolic tails of certain TGN membrane proteins during the sorting/budding process at the prevacuolar compartment. Binds phosphatidylinositol 3-phosphate (PtdIns(P3)). The sequence is that of Sorting nexin-3 (SNX3) from Yarrowia lipolytica (strain CLIB 122 / E 150) (Yeast).